Consider the following 257-residue polypeptide: Hydroxyethylthiazole kinase 1 (257 aa).

Met-41 is a substrate binding site. Lys-117 and Thr-162 together coordinate ATP. Position 189 (Gly-189) interacts with substrate.

This sequence belongs to the Thz kinase family. Mg(2+) is required as a cofactor.

It catalyses the reaction 5-(2-hydroxyethyl)-4-methylthiazole + ATP = 4-methyl-5-(2-phosphooxyethyl)-thiazole + ADP + H(+). Its pathway is cofactor biosynthesis; thiamine diphosphate biosynthesis; 4-methyl-5-(2-phosphoethyl)-thiazole from 5-(2-hydroxyethyl)-4-methylthiazole: step 1/1. Its function is as follows. Catalyzes the phosphorylation of the hydroxyl group of 4-methyl-5-beta-hydroxyethylthiazole (THZ). This Oceanobacillus iheyensis (strain DSM 14371 / CIP 107618 / JCM 11309 / KCTC 3954 / HTE831) protein is Hydroxyethylthiazole kinase 1.